Here is a 247-residue protein sequence, read N- to C-terminus: Ubiquinone biosynthesis O-methyltransferase (247 aa).

4 residues coordinate S-adenosyl-L-methionine: Arg41, Gly72, Asp93, and Met136.

This sequence belongs to the methyltransferase superfamily. UbiG/COQ3 family.

It catalyses the reaction a 3-demethylubiquinol + S-adenosyl-L-methionine = a ubiquinol + S-adenosyl-L-homocysteine + H(+). The catalysed reaction is a 3-(all-trans-polyprenyl)benzene-1,2-diol + S-adenosyl-L-methionine = a 2-methoxy-6-(all-trans-polyprenyl)phenol + S-adenosyl-L-homocysteine + H(+). It functions in the pathway cofactor biosynthesis; ubiquinone biosynthesis. Functionally, O-methyltransferase that catalyzes the 2 O-methylation steps in the ubiquinone biosynthetic pathway. This Bartonella quintana (strain Toulouse) (Rochalimaea quintana) protein is Ubiquinone biosynthesis O-methyltransferase.